Reading from the N-terminus, the 563-residue chain is MRYIKSITQQKLSFLLAIYIGLFMNGAVFYRRFGSYAHDFTVWKGISAVVELAATVLVTFFLLRLLSLFGRRSWRILASLVVLFSAGASYYMTFLNVVIGYGIIASVMTTDIDLSKEVVGLNFILWLIAVSALPLILIWNNRCRYTLLRQLRTPGQRIRSLAVVVLAGIMVWAPIRLLDIQQKKVERATGVDLPSYGGVVANSYLPSNWLSALGLYAWARVDESSDNNSLLNPAKKFTYQAPQNVDDTYVVFIIGETTRWDHMGIFGYERNTTPKLAQEKNLAAFRGYSCDTATKLSLRCMFVRQGGAEDNPQRTLKEQNIFAVLKQLGFSSDLYAMQSEMWFYSNTMADNIAYREQIGAEPRNRGKPVDDMLLVDEMQQSLGRNPDGKHLIILHTKGSHFNYTQRYPRSFAQWKPECIGVDSGCTKAQMINSYDNSVTYVDHFISSVIDQVRDKKAIVFYAADHGESINEREHLHGTPRELAPPEQFRVPMMVWMSDKYLENPANAQAFAQLKKEADMKVPRRHVELYDTIMGCLGYTSPDGGINENNNWCHIPQAKEAAAN.

Over 1–9 (MRYIKSITQ) the chain is Cytoplasmic. A helical membrane pass occupies residues 10–30 (QKLSFLLAIYIGLFMNGAVFY). The Periplasmic segment spans residues 31–48 (RRFGSYAHDFTVWKGISA). The chain crosses the membrane as a helical span at residues 49 to 69 (VVELAATVLVTFFLLRLLSLF). The Cytoplasmic portion of the chain corresponds to 70 to 79 (GRRSWRILAS). The chain crosses the membrane as a helical span at residues 80-100 (LVVLFSAGASYYMTFLNVVIG). The Periplasmic portion of the chain corresponds to 101–117 (YGIIASVMTTDIDLSKE). Residues 118-138 (VVGLNFILWLIAVSALPLILI) traverse the membrane as a helical segment. Residues 139–159 (WNNRCRYTLLRQLRTPGQRIR) lie on the Cytoplasmic side of the membrane. The helical transmembrane segment at 160 to 180 (SLAVVVLAGIMVWAPIRLLDI) threads the bilayer. Residues 181-563 (QQKKVERATG…IPQAKEAAAN (383 aa)) lie on the Periplasmic side of the membrane.

Belongs to the phosphoethanolamine transferase family. EptB subfamily. The cofactor is Ca(2+).

It is found in the cell inner membrane. The enzyme catalyses alpha-Kdo-(2-&gt;4)-alpha-Kdo-(2-&gt;6)-lipid A (E. coli) + a 1,2-diacyl-sn-glycero-3-phosphoethanolamine = 7-O-[2-aminoethoxy(hydroxy)phosphoryl]-alpha-Kdo-(2-&gt;4)-alpha-Kdo-(2-&gt;6)-lipid A + a 1,2-diacyl-sn-glycerol. It catalyses the reaction alpha-Kdo-(2-&gt;4)-alpha-Kdo-(2-&gt;6)-lipid IVA (E. coli) + a 1,2-diacyl-sn-glycero-3-phosphoethanolamine = 7-O-[2-aminoethoxy(hydroxy)phosphoryl]-alpha-Kdo-(2-&gt;4)-alpha-Kdo-(2-&gt;6)-lipid IVA (E. coli) + a 1,2-diacyl-sn-glycerol. Its activity is regulated as follows. Inhibited by calcium concentrations higher than 1 mM. Functionally, catalyzes the addition of a phosphoethanolamine (pEtN) moiety to the outer 3-deoxy-D-manno-octulosonic acid (Kdo) residue of a Kdo(2)-lipid A. Phosphatidylethanolamines with one unsaturated acyl group function as pEtN donors and the reaction releases diacylglycerol. This is Kdo(2)-lipid A phosphoethanolamine 7''-transferase (eptB) from Escherichia coli (strain K12).